A 576-amino-acid polypeptide reads, in one-letter code: Glutamine--tRNA ligase (576 aa).

A 'HIGH' region motif is present at residues 47 to 57 (PEPNGYLHIGH). ATP is bound by residues 48–50 (EPN) and 54–60 (HIGHAKS). L-glutamine contacts are provided by aspartate 80 and tyrosine 229. ATP-binding positions include threonine 248 and 283–284 (RL). The 'KMSKS' region signature appears at 290–294 (ITSKR).

Belongs to the class-I aminoacyl-tRNA synthetase family. As to quaternary structure, monomer.

It is found in the cytoplasm. It catalyses the reaction tRNA(Gln) + L-glutamine + ATP = L-glutaminyl-tRNA(Gln) + AMP + diphosphate. The chain is Glutamine--tRNA ligase from Ralstonia pickettii (strain 12J).